The sequence spans 213 residues: Imidazole glycerol phosphate synthase subunit HisH 1 (213 aa).

The Glutamine amidotransferase type-1 domain maps to 3–213; it reads SVSILDYGVG…LSIIQQFLQI (211 aa). Cysteine 81 serves as the catalytic Nucleophile. Catalysis depends on residues histidine 195 and glutamate 197.

As to quaternary structure, heterodimer of HisH and HisF.

The protein resides in the cytoplasm. The catalysed reaction is 5-[(5-phospho-1-deoxy-D-ribulos-1-ylimino)methylamino]-1-(5-phospho-beta-D-ribosyl)imidazole-4-carboxamide + L-glutamine = D-erythro-1-(imidazol-4-yl)glycerol 3-phosphate + 5-amino-1-(5-phospho-beta-D-ribosyl)imidazole-4-carboxamide + L-glutamate + H(+). It catalyses the reaction L-glutamine + H2O = L-glutamate + NH4(+). It functions in the pathway amino-acid biosynthesis; L-histidine biosynthesis; L-histidine from 5-phospho-alpha-D-ribose 1-diphosphate: step 5/9. Its function is as follows. IGPS catalyzes the conversion of PRFAR and glutamine to IGP, AICAR and glutamate. The HisH subunit provides the glutamine amidotransferase activity that produces the ammonia necessary to HisF for the synthesis of IGP and AICAR. In Legionella pneumophila (strain Lens), this protein is Imidazole glycerol phosphate synthase subunit HisH 1.